The chain runs to 251 residues: Chromobox protein homolog 7 (251 aa).

Residues 11 to 69 enclose the Chromo domain; it reads FAVESIRKKRVRKGKVEYLVKWKGWPPKYSTWEPEEHILDPRLVMAYEEKEERDRASGY. Positions 190–220 are disordered; sequence EPAAQPPEEEADADLAEGPPPWTPALPSSEV. A required for cellular lifespan extension region spans residues 223–236; it reads TDITANSITVTFRE.

Component of a PRC1-like complex. Interacts with RING1 and RNF2/RING1B, but not with BMI1, EED or EZH2. Interacts with PCGF1, PCGF2, PCGF3, PCGF5 and PCGF6.

The protein localises to the nucleus. Functionally, component of a Polycomb group (PcG) multiprotein PRC1-like complex, a complex class required to maintain the transcriptionally repressive state of many genes, including Hox genes, throughout development. PcG PRC1 complex acts via chromatin remodeling and modification of histones; it mediates monoubiquitination of histone H2A 'Lys-119', rendering chromatin heritably changed in its expressibility. Promotes histone H3 trimethylation at 'Lys-9' (H3K9me3). Binds to trimethylated lysine residues in histones, and possibly also other proteins. Regulator of cellular lifespan by maintaining the repression of CDKN2A, but not by inducing telomerase activity. The sequence is that of Chromobox protein homolog 7 (CBX7) from Homo sapiens (Human).